We begin with the raw amino-acid sequence, 623 residues long: Serine/threonine-protein kinase ArnS (623 aa).

2 helical membrane-spanning segments follow: residues 13–33 and 49–69; these read MILI…GIVL and VYLI…QSLI. A Protein kinase domain is found at 317–623; sequence YRVIEVIGLG…SYDIVKILEG (307 aa). Residues 323–331 and Lys-344 each bind ATP; that span reads IGLGGNGYV. Catalysis depends on Asp-460, which acts as the Proton acceptor.

Belongs to the protein kinase superfamily. Ser/Thr protein kinase family. Post-translationally, autophosphorylated.

Its subcellular location is the cell membrane. It catalyses the reaction L-seryl-[protein] + ATP = O-phospho-L-seryl-[protein] + ADP + H(+). It carries out the reaction L-threonyl-[protein] + ATP = O-phospho-L-threonyl-[protein] + ADP + H(+). With respect to regulation, autophosphorylation is stimulated by Mn(2+). In terms of biological role, plays an essential role in the controlled expression of archaellum components during starvation-induced motility. May inhibit arnR transcription and promote ArnR translation. The polypeptide is Serine/threonine-protein kinase ArnS (Sulfolobus acidocaldarius (strain ATCC 33909 / DSM 639 / JCM 8929 / NBRC 15157 / NCIMB 11770)).